A 525-amino-acid chain; its full sequence is Chromaffin granule amine transporter (525 aa).

Residues 1 to 21 (MLRTILDAPQRLLKEGRASRQ) lie on the Cytoplasmic side of the membrane. Residues 22–42 (LVLVVVFVALLLDNMLFTVVV) form a helical membrane-spanning segment. Residues 43–138 (PIVPTFLYDM…TGFLEEEITR (96 aa)) lie on the Lumenal, vesicle side of the membrane. N-linked (GlcNAc...) asparagine glycans are attached at residues N58, N87, and N104. The chain crosses the membrane as a helical span at residues 139–158 (VGVLFASKAVMQLLVNPFVG). At 159-167 (PLTNRIGYH) the chain is on the cytoplasmic side. The helical transmembrane segment at 168–188 (IPMFAGFVIMFLSTVMFAFSG) threads the bilayer. The Lumenal, vesicle portion of the chain corresponds to 189-197 (TYTLLFVAR). The helical transmembrane segment at 198 to 218 (TLQGIGSSFSSVAGLGMLASV) threads the bilayer. At 219-227 (YTDDHERGR) the chain is on the cytoplasmic side. Residues 228-250 (AMGTALGGLALGLLVGAPFGSVM) form a helical membrane-spanning segment. At 251-256 (YEFVGK) the chain is on the lumenal, vesicle side. The chain crosses the membrane as a helical span at residues 257–279 (SAPFLILAFLALLDGALQLCILQ). Over 280–299 (PSKVSPESAKGTPLFMLLKD) the chain is Cytoplasmic. The chain crosses the membrane as a helical span at residues 300-319 (PYILVAAGSICFANMGVAIL). Residues 320 to 335 (EPTLPIWMMQTMCSPK) lie on the Lumenal, vesicle side of the membrane. The chain crosses the membrane as a helical span at residues 336–360 (WQLGLAFLPASVSYLIGTNLFGVLA). At 361–365 (NKMGR) the chain is on the cytoplasmic side. A helical transmembrane segment spans residues 366-386 (WLCSLIGMLVVGTSLLCVPLA). Over 387–397 (HNIFGLIGPNA) the chain is Lumenal, vesicle. A helical membrane pass occupies residues 398–418 (GLGLAIGMVDSSMMPIMGHLV). Residues 419-422 (DLRH) are Cytoplasmic-facing. The chain crosses the membrane as a helical span at residues 423 to 443 (TSVYGSVYAIADVAFCMGFAI). The Lumenal, vesicle segment spans residues 444-448 (GPSTG). A helical membrane pass occupies residues 449–470 (GAIVKAIGFPWLMVITGVINIV). Residues 471–525 (YAPLCYYLRSPPAKEEKLAILSQDCPMETRMYATQKPTKEFPLGEDSDEEPDHEE) are Cytoplasmic-facing. The tract at residues 503–525 (ATQKPTKEFPLGEDSDEEPDHEE) is disordered. The span at 513 to 525 (LGEDSDEEPDHEE) shows a compositional bias: acidic residues.

It belongs to the major facilitator superfamily. Vesicular transporter family. As to expression, expressed primarily in neuroendocrine tissues. Highly expressed in chromaffin cells of the adrenal medulla (at protein level). Detected in peripheral sympathetic ganglia (at protein level). Found in some paracrine cells in stomach and duodenum (at protein level). Expressed in substantia nigra. Expressed in gastrointestinal tract.

It localises to the cytoplasmic vesicle. Its subcellular location is the secretory vesicle membrane. It is found in the secretory vesicle. The protein resides in the synaptic vesicle membrane. The protein localises to the endoplasmic reticulum membrane. It carries out the reaction serotonin(in) + 2 H(+)(out) = serotonin(out) + 2 H(+)(in). The enzyme catalyses (R)-noradrenaline(in) + 2 H(+)(out) = (R)-noradrenaline(out) + 2 H(+)(in). It catalyses the reaction dopamine(in) + 2 H(+)(out) = dopamine(out) + 2 H(+)(in). Strongly inhibited by reserpine. Also inhibited to a lesser extent by ketanserin and fenfluramine. Not significantly inhibited by tetrabenazine. In terms of biological role, electrogenic antiporter that exchanges one cationic monoamine with two intravesicular protons across the membrane of secretory and synaptic vesicles. Uses the electrochemical proton gradient established by the V-type proton-pump ATPase to accumulate high concentrations of monoamines inside the vesicles prior to their release via exocytosis. Transports catecholamines and indolamines with higher affinity for serotonin. Regulates the transvesicular monoaminergic gradient that determines the quantal size. Mediates presynaptic monoaminergic vesicle transport in the amygdala and prefrontal brain regions related with emotion processing in response to environmental stimuli. Its function is as follows. Unable to uptake serotonin. In Homo sapiens (Human), this protein is Chromaffin granule amine transporter (SLC18A1).